A 682-amino-acid chain; its full sequence is Potassium-transporting ATPase ATP-binding subunit (682 aa).

4 helical membrane passes run 34-54 (PVMFIVWIGSLLTTCISIAMA), 62-82 (ALFSAAISGWLWITVLFANFA), 219-239 (IALTILLIALTIVFLLATATL), and 254-274 (VLVALLVCLIPTTIGGLLSAI). Asp307 serves as the catalytic 4-aspartylphosphate intermediate. ATP-binding positions include Asp344, Glu348, 377–384 (FTAQSRMS), and Lys395. Positions 518 and 522 each coordinate Mg(2+). 3 helical membrane passes run 588–608 (FAIIPAAFAATYPQLNALNIM), 616–636 (AILSAVIFNALIIVFLIPLAL), and 656–676 (IYGLGGLLVPFIGIKVIDLLL).

It belongs to the cation transport ATPase (P-type) (TC 3.A.3) family. Type IA subfamily. As to quaternary structure, the system is composed of three essential subunits: KdpA, KdpB and KdpC.

It localises to the cell inner membrane. It catalyses the reaction K(+)(out) + ATP + H2O = K(+)(in) + ADP + phosphate + H(+). Its function is as follows. Part of the high-affinity ATP-driven potassium transport (or Kdp) system, which catalyzes the hydrolysis of ATP coupled with the electrogenic transport of potassium into the cytoplasm. This subunit is responsible for energy coupling to the transport system and for the release of the potassium ions to the cytoplasm. The protein is Potassium-transporting ATPase ATP-binding subunit of Escherichia coli (strain ATCC 8739 / DSM 1576 / NBRC 3972 / NCIMB 8545 / WDCM 00012 / Crooks).